The primary structure comprises 108 residues: Protein YcgL (108 aa).

A YcgL domain is found at 12-96 (MFCVIYRSSK…PPEDLLKQHL (85 aa)).

This is Protein YcgL from Shigella sonnei (strain Ss046).